A 108-amino-acid polypeptide reads, in one-letter code: MVDFMDYNDFQKKLDKEEHGDGITVGAVYTGEFTLYLLFIFGALIIGRVYGKTLMTLFGLAALAFSLSVSPLIFKFKEENSNAINYQLFWLSIFLGAIAFCIYMTTRW.

Transmembrane regions (helical) follow at residues Gly26–Ile46, Leu54–Phe74, and Ile84–Met104.

It localises to the cell membrane. This is an uncharacterized protein from Methanocaldococcus jannaschii (strain ATCC 43067 / DSM 2661 / JAL-1 / JCM 10045 / NBRC 100440) (Methanococcus jannaschii).